We begin with the raw amino-acid sequence, 216 residues long: Adenylate kinase (216 aa).

10–15 is a binding site for ATP; sequence GAGKGT. The NMP stretch occupies residues 30–59; sequence STGDMFRAAMKNETALGLEAKSYIDKGELV. Residues Thr-31, Arg-36, 57 to 59, 85 to 88, and Gln-92 each bind AMP; these read ELV and GFPR. An LID region spans residues 126–164; the sequence is GRFICRTCGATYHKLFNPPKVEGTCDRCGGHEFYQREDD. Residue Arg-127 participates in ATP binding. Positions 130 and 133 each coordinate Zn(2+). 136–137 contributes to the ATP binding site; the sequence is TY. Zn(2+) contacts are provided by Cys-150 and Cys-153. Positions 161 and 172 each coordinate AMP. An ATP-binding site is contributed by Arg-200.

The protein belongs to the adenylate kinase family. In terms of assembly, monomer.

Its subcellular location is the cytoplasm. It catalyses the reaction AMP + ATP = 2 ADP. It participates in purine metabolism; AMP biosynthesis via salvage pathway; AMP from ADP: step 1/1. Catalyzes the reversible transfer of the terminal phosphate group between ATP and AMP. Plays an important role in cellular energy homeostasis and in adenine nucleotide metabolism. This Enterococcus faecalis (strain ATCC 700802 / V583) protein is Adenylate kinase.